The primary structure comprises 455 residues: Venom prothrombin activator trocarin-D (455 aa).

The signal sequence occupies residues 1–20 (MAPQLLLCLILTFLWSLPEA). A propeptide spanning residues 21 to 40 (ESNVFLKSKVANRFLQRTKR) is cleaved from the precursor. A Gla domain is found at 41 to 86 (SNSLFEEIRPGNIERECIEEKCSKEEAREVFEDNEKTETFWNVYVD). Glutamate 46, glutamate 47, glutamate 54, glutamate 56, glutamate 59, glutamate 60, glutamate 65, glutamate 66, glutamate 69, glutamate 72, and glutamate 75 each carry 4-carboxyglutamate. Cysteines 57 and 62 form a disulfide. The EGF-like 1; calcium-binding domain maps to 86–122 (DGDQCSSNPCHYRGTCKDGIGSYTCTCLPNYEGKNCE). 11 disulfides stabilise this stretch: cysteine 90/cysteine 101, cysteine 95/cysteine 110, cysteine 112/cysteine 121, cysteine 129/cysteine 140, cysteine 136/cysteine 149, cysteine 151/cysteine 164, cysteine 172/cysteine 328, cysteine 216/cysteine 221, cysteine 236/cysteine 252, cysteine 376/cysteine 390, and cysteine 401/cysteine 429. An O-linked (Hex...) serine glycan is attached at serine 92. In terms of domain architecture, EGF-like 2 spans 129 to 164 (CRVDNGNCWHFCKRVQSETQCSCAESYRLGVDGHSC). A propeptide spans 182-209 (REASLPDFVQSQKATLLKKSDNPSPDIR) (activation peptide). The Peptidase S1 domain maps to 210–453 (IVNGMDCKLG…FIPWIKKIMS (244 aa)). Residue histidine 251 is the Charge relay system of the active site. N-linked (GlcNAc...) asparagine glycosylation occurs at asparagine 254. Aspartate 308 serves as the catalytic Charge relay system. Residue serine 405 is the Charge relay system of the active site.

It belongs to the peptidase S1 family. Snake venom subfamily. Heterodimer of a light chain and a heavy chain; disulfide-linked. Post-translationally, gamma-carboxyglutamate residues are formed by vitamin K dependent carboxylation. These residues are essential for the binding of calcium. The O-linked saccharides at Ser-92 are a mixture of Xyl-Glc, and Glc along with smaller amounts of Xyl-GlcNAc, GlcNAc, Gal, GalNAc, Xyl-Gal, and Xyl-GalNAc, suggesting that the glycosyl transferases responsible for this modification are non-specific. The N-linked carbohydrate at Asn-254 (Asn-45 of the heavy chain) is a sialylated and diantennary oligosaccharide. Expressed by the venom gland.

The protein localises to the secreted. The catalysed reaction is Selective cleavage of Arg-|-Thr and then Arg-|-Ile bonds in prothrombin to form thrombin.. With respect to regulation, activated by calcium and phospholipids. Its function is as follows. Snake prothrombin activator that attacks the hemostatic system of prey. This protein is functionally similar to blood coagulation factor Xa. Induces cyanosis and death in mice at 1 mg/kg body weight during blood clotting. The protein is Venom prothrombin activator trocarin-D of Tropidechis carinatus (Australian rough-scaled snake).